A 391-amino-acid chain; its full sequence is Metal tolerance protein 7 (391 aa).

Residues 1 to 21 form a disordered region; the sequence is MGSRGRRGGGERETETEEDET. The Cytoplasmic segment spans residues 1–103; that stretch reads MGSRGRRGGG…LRQMAKGERL (103 aa). The chain crosses the membrane as a helical span at residues 104-124; sequence AINLSNIINLILFIGKVLASV. The Vacuolar portion of the chain corresponds to 125–134; the sequence is ESLSMAVIAS. The chain crosses the membrane as a helical span at residues 135–155; sequence TLDSLLDLLSGFILWFTAHAM. Residues 156–171 lie on the Cytoplasmic side of the membrane; sequence KKPNKYSYPIGKRRMQ. Residues 172 to 192 form a helical membrane-spanning segment; the sequence is PVGIIVFASVMGTLGFQVLIE. The Vacuolar portion of the chain corresponds to 193-210; sequence SGRQLITNEHQVFDHRKE. The chain crosses the membrane as a helical span at residues 211–231; sequence LWMIGSMSSVAVVKFFLMLYC. The Cytoplasmic portion of the chain corresponds to 232–246; that stretch reads RSFKNEIVRAYAQDH. The chain crosses the membrane as a helical span at residues 247–264; the sequence is FFDVITNSVGLVSALLAV. Residues 265-266 are Vacuolar-facing; the sequence is RY. The helical transmembrane segment at 267–287 threads the bilayer; it reads KWWMDPVGAILIAVYTITTWA. The Cytoplasmic segment spans residues 288-391; the sequence is RTVVENVGTL…THRPEHKAEV (104 aa).

The protein belongs to the cation diffusion facilitator (CDF) transporter (TC 2.A.4) family. SLC30A subfamily.

Its subcellular location is the vacuole membrane. Functionally, involved in sequestration of excess metal in the cytoplasm into vacuoles to maintain metal homeostasis. The polypeptide is Metal tolerance protein 7 (MTP7) (Oryza sativa subsp. japonica (Rice)).